Here is a 179-residue protein sequence, read N- to C-terminus: MLYHVEMFTIILLFGFSLADYCGSDQVPYGMEVHHSGVVRLMCSKPNCYDKNYSDCPERAESRHGCQKSNQWVGGFEKNIEGDLYTMCCEFEGLEKYAKVRYSDVRIRRGEFFEGEEKENDDGDVVKFDVIKDIRMHKDDEGQAYYNLTVLSFNCESIPDVKPAWYQKSQWPYFQFAKN.

Positions 1-19 (MLYHVEMFTIILLFGFSLA) are cleaved as a signal peptide. Asparagine 52 and asparagine 147 each carry an N-linked (GlcNAc...) asparagine glycan.

In terms of tissue distribution, expressed in the trinucleate pharyngeal gland cell g1, seam cells and hypodermis.

The protein localises to the secreted. Intercellular signal essential for a variety of patterning events during development. The sequence is that of Warthog protein 3 (wrt-3) from Caenorhabditis elegans.